Here is a 643-residue protein sequence, read N- to C-terminus: 1-deoxy-D-xylulose-5-phosphate synthase (643 aa).

Residues H79 and 120 to 122 (AHA) contribute to the thiamine diphosphate site. Residue D151 coordinates Mg(2+). Residues 152–153 (GS), N180, Y287, and E369 contribute to the thiamine diphosphate site. N180 contributes to the Mg(2+) binding site.

The protein belongs to the transketolase family. DXPS subfamily. Homodimer. Mg(2+) is required as a cofactor. Requires thiamine diphosphate as cofactor.

The catalysed reaction is D-glyceraldehyde 3-phosphate + pyruvate + H(+) = 1-deoxy-D-xylulose 5-phosphate + CO2. It functions in the pathway metabolic intermediate biosynthesis; 1-deoxy-D-xylulose 5-phosphate biosynthesis; 1-deoxy-D-xylulose 5-phosphate from D-glyceraldehyde 3-phosphate and pyruvate: step 1/1. Catalyzes the acyloin condensation reaction between C atoms 2 and 3 of pyruvate and glyceraldehyde 3-phosphate to yield 1-deoxy-D-xylulose-5-phosphate (DXP). This Maricaulis maris (strain MCS10) (Caulobacter maris) protein is 1-deoxy-D-xylulose-5-phosphate synthase.